The following is a 98-amino-acid chain: Small ribosomal subunit protein bS6 (98 aa).

It belongs to the bacterial ribosomal protein bS6 family.

Binds together with bS18 to 16S ribosomal RNA. This chain is Small ribosomal subunit protein bS6, found in Lactobacillus helveticus (strain DPC 4571).